An 827-amino-acid polypeptide reads, in one-letter code: N-terminal kinase-like protein (827 aa).

Positions 1–309 constitute a Protein kinase domain; it reads MWFWSRDPAR…PEDFCRHKIL (309 aa). HEAT repeat units follow at residues 345–383, 384–422, and 502–540; these read IIPV…VNAQ, IFPH…LNME, and VLPV…EDPS. Over residues 586–624 the composition is skewed to low complexity; the sequence is DAAASEGASAPSTASEASKPDTAPSSSAPPAAASTAPTS. The segment at 586–827 is disordered; that stretch reads DAAASEGASA…PLKLGVRKLD (242 aa). Positions 630 to 640 are enriched in basic and acidic residues; it reads EKGAPDNSLDR. Positions 641–652 are enriched in acidic residues; it reads WDDEDWGSLEDA. The span at 667 to 678 shows a compositional bias: basic and acidic residues; that stretch reads DWGHGKTQEKTV. 2 stretches are compositionally biased toward polar residues: residues 679-690 and 737-746; these read DFSSSRSKTKQV and NWDTSGSSGR. Over residues 774 to 783 the composition is skewed to acidic residues; sequence GGDDNWESVE. A coiled-coil region spans residues 788–817; that stretch reads LSKAEMARKKREERQKEIEAKRAERRAAKG. A compositionally biased stretch (basic and acidic residues) spans 792 to 814; it reads EMARKKREERQKEIEAKRAERRA.

It belongs to the protein kinase superfamily.

Functionally, regulates COPI-mediated retrograde protein traffic at the interface between the Golgi apparatus and the endoplasmic reticulum. Involved in the maintenance of the Golgi apparatus morphology. This Xenopus tropicalis (Western clawed frog) protein is N-terminal kinase-like protein (scyl1).